Here is a 305-residue protein sequence, read N- to C-terminus: Dihydroorotate dehydrogenase A (fumarate) (305 aa).

Residues S21 and 45–46 (KS) each bind FMN. Substrate is bound by residues K45, 69–73 (NAIGL), and N129. N129 is an FMN binding site. The active-site Nucleophile is the C132. Residues K167 and I193 each contribute to the FMN site. Position 194–195 (194–195 (NT)) interacts with substrate. Residues G219 and 245 to 246 (GG) contribute to the FMN site.

This sequence belongs to the dihydroorotate dehydrogenase family. Type 1 subfamily. In terms of assembly, homodimer. FMN is required as a cofactor.

It localises to the cytoplasm. The enzyme catalyses (S)-dihydroorotate + fumarate = orotate + succinate. The protein operates within pyrimidine metabolism; UMP biosynthesis via de novo pathway. Functionally, catalyzes the conversion of dihydroorotate to orotate with fumarate as the electron acceptor. The protein is Dihydroorotate dehydrogenase A (fumarate) (pyrD) of Lactiplantibacillus plantarum (strain ATCC BAA-793 / NCIMB 8826 / WCFS1) (Lactobacillus plantarum).